Reading from the N-terminus, the 140-residue chain is UPF0225 protein SAV_6631 (140 aa).

Residues 1-22 are disordered; that stretch reads MSKSRRTRSTSRPTSRPQPASC. Residues 10-19 are compositionally biased toward low complexity; the sequence is TSRPTSRPQP.

It belongs to the UPF0225 family.

This is UPF0225 protein SAV_6631 from Streptomyces avermitilis (strain ATCC 31267 / DSM 46492 / JCM 5070 / NBRC 14893 / NCIMB 12804 / NRRL 8165 / MA-4680).